A 294-amino-acid polypeptide reads, in one-letter code: Indole-3-glycerol phosphate synthase (294 aa).

Belongs to the TrpC family.

The enzyme catalyses 1-(2-carboxyphenylamino)-1-deoxy-D-ribulose 5-phosphate + H(+) = (1S,2R)-1-C-(indol-3-yl)glycerol 3-phosphate + CO2 + H2O. It participates in amino-acid biosynthesis; L-tryptophan biosynthesis; L-tryptophan from chorismate: step 4/5. In Parasynechococcus marenigrum (strain WH8102), this protein is Indole-3-glycerol phosphate synthase.